Reading from the N-terminus, the 208-residue chain is Large ribosomal subunit protein uL3 (208 aa).

Positions 116 to 146 (GFQGAIKRHGQSRGPMAHGSRYHRRPGSMGP) are disordered.

This sequence belongs to the universal ribosomal protein uL3 family. Part of the 50S ribosomal subunit. Forms a cluster with proteins L14 and L19.

Its function is as follows. One of the primary rRNA binding proteins, it binds directly near the 3'-end of the 23S rRNA, where it nucleates assembly of the 50S subunit. The chain is Large ribosomal subunit protein uL3 from Streptococcus mutans serotype c (strain ATCC 700610 / UA159).